A 319-amino-acid polypeptide reads, in one-letter code: MHYFNRAKKAKNNEFYTLFEDIAAEVACYPNAFKGKVVLCNCNDGYQSNFWQFFQSQFHALGLKKLVAIAFNPLGNSYQLNFDGKEIKELPLAGNGSFDSAEAIVLLKQSDIVVTNPPFSLFQDFVCLLAEHGKQFLVLGHNGAVGYNQIFKLFKEEQLWYGHTVNSSMLFQVQSNFKLYDPKSVNFVKKDGQLFQKVPGISWFTNLKKNQQPAWLKTKSRYQGNEHKYPKFDWYDAIFVSKVKEIPLDWFGYMGVPLTFLNCFNPKQFELIDCLANPYATLDTLKTNAYVRSHHGDVRNVKGKRRYVRVVIKQRQNVI.

It belongs to the N(4)/N(6)-methyltransferase family.

It carries out the reaction a 2'-deoxyadenosine in DNA + S-adenosyl-L-methionine = an N(6)-methyl-2'-deoxyadenosine in DNA + S-adenosyl-L-homocysteine + H(+). A methylase that recognizes the double-stranded sequence 5'-CTAT-3' and methylates A-3 on one strand; probably responsible for all of the methylation on this site in the genome. This is Type II methyltransferase M.MpnI from Mycoplasma pneumoniae (strain ATCC 29342 / M129 / Subtype 1) (Mycoplasmoides pneumoniae).